We begin with the raw amino-acid sequence, 703 residues long: Phosphate acetyltransferase (703 aa).

A phosphate acetyltransferase region spans residues 377 to 703 (AFRYELIQKA…IQATQAREGA (327 aa)).

This sequence in the N-terminal section; belongs to the CobB/CobQ family. In the C-terminal section; belongs to the phosphate acetyltransferase and butyryltransferase family.

The protein localises to the cytoplasm. The enzyme catalyses acetyl-CoA + phosphate = acetyl phosphate + CoA. It functions in the pathway metabolic intermediate biosynthesis; acetyl-CoA biosynthesis; acetyl-CoA from acetate: step 2/2. Functionally, involved in acetate metabolism. The protein is Phosphate acetyltransferase (pta) of Deinococcus geothermalis (strain DSM 11300 / CIP 105573 / AG-3a).